Here is a 499-residue protein sequence, read N- to C-terminus: DNA-directed RNA polymerase subunit Rpo2N (499 aa).

Belongs to the RNA polymerase beta chain family. Part of the RNA polymerase complex.

It localises to the cytoplasm. It catalyses the reaction RNA(n) + a ribonucleoside 5'-triphosphate = RNA(n+1) + diphosphate. DNA-dependent RNA polymerase (RNAP) catalyzes the transcription of DNA into RNA using the four ribonucleoside triphosphates as substrates. The Rpo2 subunit (Rpo2N and Rpo2C in this organism) is implicated in DNA promoter recognition and in nucleotide binding. The sequence is that of DNA-directed RNA polymerase subunit Rpo2N from Methanococcus vannielii (strain ATCC 35089 / DSM 1224 / JCM 13029 / OCM 148 / SB).